Consider the following 156-residue polypeptide: Small ribosomal subunit protein uS7 (156 aa).

The protein belongs to the universal ribosomal protein uS7 family. As to quaternary structure, part of the 30S ribosomal subunit. Contacts proteins S9 and S11.

In terms of biological role, one of the primary rRNA binding proteins, it binds directly to 16S rRNA where it nucleates assembly of the head domain of the 30S subunit. Is located at the subunit interface close to the decoding center, probably blocks exit of the E-site tRNA. This Desulfatibacillum aliphaticivorans protein is Small ribosomal subunit protein uS7.